A 58-amino-acid chain; its full sequence is Photosystem II reaction center protein K (58 aa).

Positions 1–21 are excised as a propeptide; that stretch reads MFDLYLKNLLDLSDSGTVVLA. The helical transmembrane segment at 29-49 threads the bilayer; it reads IFDPIVDVLPVIPVFFLLLAF.

It belongs to the PsbK family. PSII is composed of 1 copy each of membrane proteins PsbA, PsbB, PsbC, PsbD, PsbE, PsbF, PsbH, PsbI, PsbJ, PsbK, PsbL, PsbM, PsbT, PsbX, PsbY, PsbZ, Psb30/Ycf12, at least 3 peripheral proteins of the oxygen-evolving complex and a large number of cofactors. It forms dimeric complexes.

Its subcellular location is the plastid. The protein localises to the chloroplast thylakoid membrane. Its function is as follows. One of the components of the core complex of photosystem II (PSII). PSII is a light-driven water:plastoquinone oxidoreductase that uses light energy to abstract electrons from H(2)O, generating O(2) and a proton gradient subsequently used for ATP formation. It consists of a core antenna complex that captures photons, and an electron transfer chain that converts photonic excitation into a charge separation. The chain is Photosystem II reaction center protein K from Zygnema circumcarinatum (Green alga).